Consider the following 439-residue polypeptide: IAA-amino acid hydrolase ILR1-like 2 (439 aa).

The first 21 residues, 1 to 21 (MALNKLLSLTFQLLLFLLSVS), serve as a signal peptide directing secretion. Residues C137, H139, E173, H197, and H397 each coordinate Mn(2+). Positions 436–439 (HEEL) match the Prevents secretion from ER motif.

The protein belongs to the peptidase M20 family. In terms of assembly, monomer. Mn(2+) serves as cofactor. As to expression, expressed in leaves, stems, siliques, seeds and flowers. Detected in the distal tips of cotyledons and seedling leaves, hydathodes of leaves from mature plants, pollen, ovules and developing seeds.

Its subcellular location is the endoplasmic reticulum lumen. Functionally, hydrolyzes certain amino acid conjugates of the plant growth regulator indole-3-acetic acid (IAA), including IAA-Ala, IAA-Leu, IAA-Met, IAA-Phe, IAA-Ser, IAA-Thr, IAA-Tyr and IAA-Val. Is the most efficient enzyme of the ILL family for IAA-Ala. Not important for IAA-Leu hydrolysis in roots. May act with ILR1 to provide free IAA to germinating seedlings. The protein is IAA-amino acid hydrolase ILR1-like 2 of Arabidopsis thaliana (Mouse-ear cress).